The primary structure comprises 339 residues: tRNA N6-adenosine threonylcarbamoyltransferase (339 aa).

Fe cation contacts are provided by histidine 114 and histidine 118. Substrate contacts are provided by residues valine 137–glycine 141, aspartate 170, glycine 183, aspartate 187, and asparagine 277. Aspartate 305 contacts Fe cation.

Belongs to the KAE1 / TsaD family. Requires Fe(2+) as cofactor.

The protein resides in the cytoplasm. The catalysed reaction is L-threonylcarbamoyladenylate + adenosine(37) in tRNA = N(6)-L-threonylcarbamoyladenosine(37) in tRNA + AMP + H(+). In terms of biological role, required for the formation of a threonylcarbamoyl group on adenosine at position 37 (t(6)A37) in tRNAs that read codons beginning with adenine. Is involved in the transfer of the threonylcarbamoyl moiety of threonylcarbamoyl-AMP (TC-AMP) to the N6 group of A37, together with TsaE and TsaB. TsaD likely plays a direct catalytic role in this reaction. The polypeptide is tRNA N6-adenosine threonylcarbamoyltransferase (Clostridium beijerinckii (strain ATCC 51743 / NCIMB 8052) (Clostridium acetobutylicum)).